A 331-amino-acid polypeptide reads, in one-letter code: ADP-L-glycero-D-manno-heptose-6-epimerase (331 aa).

Residues 11 to 12 (FI), 32 to 33 (DN), K39, K54, 75 to 79 (EGACS), and N92 each bind NADP(+). Catalysis depends on Y139, which acts as the Proton acceptor. NADP(+) is bound at residue K143. Residue N168 participates in substrate binding. V169 and K177 together coordinate NADP(+). Residue K177 is the Proton acceptor of the active site. Substrate-binding positions include R179, H186, 200–203 (FGEY), R213, and Y292.

The protein belongs to the NAD(P)-dependent epimerase/dehydratase family. HldD subfamily. As to quaternary structure, homopentamer. NADP(+) serves as cofactor.

It carries out the reaction ADP-D-glycero-beta-D-manno-heptose = ADP-L-glycero-beta-D-manno-heptose. It functions in the pathway nucleotide-sugar biosynthesis; ADP-L-glycero-beta-D-manno-heptose biosynthesis; ADP-L-glycero-beta-D-manno-heptose from D-glycero-beta-D-manno-heptose 7-phosphate: step 4/4. In terms of biological role, catalyzes the interconversion between ADP-D-glycero-beta-D-manno-heptose and ADP-L-glycero-beta-D-manno-heptose via an epimerization at carbon 6 of the heptose. The protein is ADP-L-glycero-D-manno-heptose-6-epimerase of Ralstonia nicotianae (strain ATCC BAA-1114 / GMI1000) (Ralstonia solanacearum).